Here is a 187-residue protein sequence, read N- to C-terminus: Elongation factor P (187 aa).

Belongs to the elongation factor P family.

The protein resides in the cytoplasm. It participates in protein biosynthesis; polypeptide chain elongation. In terms of biological role, involved in peptide bond synthesis. Stimulates efficient translation and peptide-bond synthesis on native or reconstituted 70S ribosomes in vitro. Probably functions indirectly by altering the affinity of the ribosome for aminoacyl-tRNA, thus increasing their reactivity as acceptors for peptidyl transferase. The chain is Elongation factor P from Mycobacteroides abscessus (strain ATCC 19977 / DSM 44196 / CCUG 20993 / CIP 104536 / JCM 13569 / NCTC 13031 / TMC 1543 / L948) (Mycobacterium abscessus).